We begin with the raw amino-acid sequence, 338 residues long: POU domain, class 4, transcription factor 3 (338 aa).

The POU-IV box motif lies at 56 to 65 (RAEALAAVDI). Residues 91 to 112 (TSPTVPISHPAALTSHPHHPVH) form a disordered region. Positions 179–256 (DVESDPRELE…VLQAWLEEAE (78 aa)) constitute a POU-specific domain. The segment at residues 274 to 333 (RKRKRTSIAAPEKRSLEAYFAIQPRPSSEKIAAIAEKLDLKKNVVRVWFCNQRQKQKRMK) is a DNA-binding region (homeobox).

It belongs to the POU transcription factor family. In terms of assembly, interacts with ISL1. In terms of tissue distribution, expressed in the chochlea of the inner ear.

Its subcellular location is the nucleus. It is found in the cytoplasm. Acts as a transcriptional activator. Acts by binding to sequences related to the consensus octamer motif 5'-ATGCAAAT-3' in the regulatory regions of its target genes. Involved in the auditory system development, required for terminal differentiation of hair cells in the inner ear. This is POU domain, class 4, transcription factor 3 from Rattus norvegicus (Rat).